A 240-amino-acid chain; its full sequence is Ribosomal RNA large subunit methyltransferase E (240 aa).

Positions 1–28 are disordered; that stretch reads MSSSPRSPDARPLKVRVKSARTRSSSSQ. S-adenosyl-L-methionine is bound by residues G80, W82, D103, D119, and D143. Residue K183 is the Proton acceptor of the active site.

It belongs to the class I-like SAM-binding methyltransferase superfamily. RNA methyltransferase RlmE family.

The protein localises to the cytoplasm. It catalyses the reaction uridine(2552) in 23S rRNA + S-adenosyl-L-methionine = 2'-O-methyluridine(2552) in 23S rRNA + S-adenosyl-L-homocysteine + H(+). Its function is as follows. Specifically methylates the uridine in position 2552 of 23S rRNA at the 2'-O position of the ribose in the fully assembled 50S ribosomal subunit. The protein is Ribosomal RNA large subunit methyltransferase E of Azorhizobium caulinodans (strain ATCC 43989 / DSM 5975 / JCM 20966 / LMG 6465 / NBRC 14845 / NCIMB 13405 / ORS 571).